A 228-amino-acid chain; its full sequence is SPbeta prophage-derived uncharacterized protein YomL (228 aa).

Residues 1-28 (MRKKRVITCVMAASLTLGSLLPAGYATA) form the signal peptide.

The protein is SPbeta prophage-derived uncharacterized protein YomL (yomL) of Bacillus subtilis (strain 168).